Consider the following 166-residue polypeptide: Small ribosomal subunit protein uS9 (166 aa).

The segment covering 1 to 16 (MSDTTNEVEETYEVDE) has biased composition (acidic residues). The disordered stretch occupies residues 1–45 (MSDTTNEVEETYEVDEQGIAYSSESAPSADAPLRPATIAPANATG).

Belongs to the universal ribosomal protein uS9 family.

In Nocardioides sp. (strain ATCC BAA-499 / JS614), this protein is Small ribosomal subunit protein uS9.